We begin with the raw amino-acid sequence, 149 residues long: D-aminoacyl-tRNA deacylase (149 aa).

Positions 137–138 (GP) match the Gly-cisPro motif, important for rejection of L-amino acids motif.

This sequence belongs to the DTD family. Homodimer.

The protein localises to the cytoplasm. The enzyme catalyses glycyl-tRNA(Ala) + H2O = tRNA(Ala) + glycine + H(+). The catalysed reaction is a D-aminoacyl-tRNA + H2O = a tRNA + a D-alpha-amino acid + H(+). An aminoacyl-tRNA editing enzyme that deacylates mischarged D-aminoacyl-tRNAs. Also deacylates mischarged glycyl-tRNA(Ala), protecting cells against glycine mischarging by AlaRS. Acts via tRNA-based rather than protein-based catalysis; rejects L-amino acids rather than detecting D-amino acids in the active site. By recycling D-aminoacyl-tRNA to D-amino acids and free tRNA molecules, this enzyme counteracts the toxicity associated with the formation of D-aminoacyl-tRNA entities in vivo and helps enforce protein L-homochirality. This chain is D-aminoacyl-tRNA deacylase, found in Desulforamulus reducens (strain ATCC BAA-1160 / DSM 100696 / MI-1) (Desulfotomaculum reducens).